We begin with the raw amino-acid sequence, 811 residues long: G-type lectin S-receptor-like serine/threonine-protein kinase LECRK3 (811 aa).

A signal peptide spans 1-23 (MAHLLFLPILQLLLLYCTKSAQA). Residues 24-153 (QLNISIGSSL…DGATKWESFG (130 aa)) enclose the Bulb-type lectin domain. The Extracellular portion of the chain corresponds to 24–464 (QLNISIGSSL…DKKYWILGSS (441 aa)). N-linked (GlcNAc...) asparagine glycans are attached at residues Asn-26, Asn-39, Asn-59, Asn-219, Asn-226, Asn-237, and Asn-242. An EGF-like; atypical domain is found at 292-344 (PENICQSIQTMVGSGACGFNSYCTIDGTKNTTSCLCPQNYKFIDDKRKYKGCR). 5 disulfide bridges follow: Cys-296–Cys-314, Cys-308–Cys-325, Cys-327–Cys-343, Cys-389–Cys-411, and Cys-393–Cys-399. Residue Asn-321 is glycosylated (N-linked (GlcNAc...) asparagine). Residues 352–430 (CDLDETTAML…GKMDVNVPRT (79 aa)) form the PAN domain. The chain crosses the membrane as a helical span at residues 465-485 (LLFGSSVLVNFLLISVMLFGT). Over 486–811 (YCSITSRKKI…DPSSYISSLA (326 aa)) the chain is Cytoplasmic. Residues 521–795 (GGFQEVLGTG…KVTQMLDGAV (275 aa)) enclose the Protein kinase domain. ATP is bound by residues 527 to 535 (LGTGASGVV) and Lys-551. Asp-645 acts as the Proton acceptor in catalysis.

Belongs to the protein kinase superfamily. Ser/Thr protein kinase family.

The protein resides in the membrane. It carries out the reaction L-seryl-[protein] + ATP = O-phospho-L-seryl-[protein] + ADP + H(+). The catalysed reaction is L-threonyl-[protein] + ATP = O-phospho-L-threonyl-[protein] + ADP + H(+). In terms of biological role, involved in resistance against the herbivorous insect brown planthopper (N.lugens, BPH). Member of the BPH3 (BPH resistance locus 3) cluster which contains LECRK1, LECRK2 and LECRK3. The chain is G-type lectin S-receptor-like serine/threonine-protein kinase LECRK3 from Oryza sativa subsp. indica (Rice).